An 82-amino-acid polypeptide reads, in one-letter code: MRNIKMPKRVLQGVVISSKTDKTVTVKVERKFKHPIYKKFVKVSKKYAAHDIENKYREGDKVSIVESRPISKTKTWVVVNVE.

The protein belongs to the universal ribosomal protein uS17 family. Part of the 30S ribosomal subunit.

In terms of biological role, one of the primary rRNA binding proteins, it binds specifically to the 5'-end of 16S ribosomal RNA. The polypeptide is Small ribosomal subunit protein uS17 (Rickettsia typhi (strain ATCC VR-144 / Wilmington)).